The following is a 151-amino-acid chain: Transcriptional regulator MraZ (151 aa).

2 consecutive SpoVT-AbrB domains span residues 5–56 and 85–128; these read THRH…PLPT and SEEL…DAAR.

This sequence belongs to the MraZ family. In terms of assembly, forms oligomers.

It localises to the cytoplasm. The protein localises to the nucleoid. This is Transcriptional regulator MraZ from Acidithiobacillus ferrooxidans (strain ATCC 23270 / DSM 14882 / CIP 104768 / NCIMB 8455) (Ferrobacillus ferrooxidans (strain ATCC 23270)).